Reading from the N-terminus, the 1052-residue chain is Germline survival defective-1 (1052 aa).

The first 25 residues, 1 to 25 (MRCLISYLFHSFLIFLKFIRSDVTA), serve as a signal peptide directing secretion. Disordered stretches follow at residues 41-320 (LMKS…DPKN), 478-543 (VNGI…QSVP), 667-689 (PSSQ…EEFE), 933-965 (KQTL…NSYA), and 1033-1052 (SNNT…NSNF). The segment covering 67 to 145 (ATATAAATTQ…SSTSSTSQQT (79 aa)) has biased composition (low complexity). The span at 163-172 (TSNTANSQSG) shows a compositional bias: polar residues. Residues 178-190 (TNKDRPKEKEKNT) are compositionally biased toward basic and acidic residues. Residues 244 to 279 (NAKSSGFLSNSSLSSAGQISASSAPPVSTTPTAIPI) show a composition bias toward low complexity. Positions 305-320 (KRDEEPMPYKSTDPKN) are enriched in basic and acidic residues. The gld-4 binding stretch occupies residues 424–732 (QHPPGLPPLL…QIEKNDNLFS (309 aa)). Positions 480-514 (GISNNIPSDRQQLDSKPNTARGSSGNINQSNTTSP) are enriched in polar residues. Acidic residues predominate over residues 674-689 (DENDTDSDHESEEEFE). Positions 892–1052 (PIELPVNMQP…SGGGNQNSNF (161 aa)) are gld-3 binding. A compositionally biased stretch (low complexity) spans 950-963 (EGSQQNGGTSSSNS). Residues 1038-1052 (GVNGNSGGGNQNSNF) show a composition bias toward gly residues.

As to quaternary structure, isoform C interacts (via C-terminus) with gld-3 isoform A (via C-terminus) in an RNA-independent manner. Isoform C interacts with gld-4. In terms of tissue distribution, expressed in the germline (at protein level). In the early embryo is expressed in all cells, then becomes gradually restricted to the germ cell lineage and enriches in P granules (at protein level). In adult hermaphrodites, is expressed in the mitotic region, accumulates during early stages of meiotic prophase I and is slightly less abundant in maturing oocytes (at protein level).

Its subcellular location is the cytoplasm. The protein resides in the cytoplasmic granule. In terms of biological role, required maternally for germline survival by forming a maternal complex with gld-3. During hermaphrodite development forms a complex with gld-3 which promotes the sperm/oocyte switch freeing the translational repressor fbf to turn off sperm promoting factors. Required for proper oocyte differentiation and oogenic meiotic arrest. Stimulates the enzymatic activity of gld-4 and together they prevent gld-1 mRNA degradation. This is Germline survival defective-1 from Caenorhabditis elegans.